Here is a 735-residue protein sequence, read N- to C-terminus: Ethylene receptor 1 (735 aa).

A run of 3 helical transmembrane segments spans residues I23–V43, V54–W74, and V92–L112. Residues C65 and H69 each contribute to the Cu cation site. A GAF domain is found at D158 to L307. Residues V350–N586 form the Histidine kinase domain. At H353 the chain carries Phosphohistidine; by autocatalysis. One can recognise a Response regulatory domain in the interval K609 to L726. Residue D657 is modified to 4-aspartylphosphate. K711 participates in a covalent cross-link: Glycyl lysine isopeptide (Lys-Gly) (interchain with G-Cter in ubiquitin).

The protein belongs to the ethylene receptor family. Homodimer; disulfide-linked. Cu cation is required as a cofactor. Activation probably requires a transfer of a phosphate group between a His in the transmitter domain and an Asp of the receiver domain.

It is found in the endoplasmic reticulum membrane. It carries out the reaction ATP + protein L-histidine = ADP + protein N-phospho-L-histidine.. May act early in the ethylene signal transduction pathway, possibly as an ethylene receptor, or as a regulator of the pathway. This is Ethylene receptor 1 (ETR1) from Brassica oleracea (Wild cabbage).